We begin with the raw amino-acid sequence, 311 residues long: GTPase Era (311 aa).

The Era-type G domain maps to Arg-18–Asn-185. The G1 stretch occupies residues Gly-26–Ser-33. GTP is bound at residue Gly-26–Ser-33. The segment at Gln-52–Ala-56 is G2. The G3 stretch occupies residues Asp-73–Gly-76. GTP is bound by residues Asp-73–Ile-77 and Asn-135–Asp-138. The interval Asn-135 to Asp-138 is G4. Positions Ile-164 to Ala-166 are G5. A KH type-2 domain is found at Leu-216–Glu-293.

This sequence belongs to the TRAFAC class TrmE-Era-EngA-EngB-Septin-like GTPase superfamily. Era GTPase family. In terms of assembly, monomer.

Its subcellular location is the cytoplasm. It is found in the cell inner membrane. Functionally, an essential GTPase that binds both GDP and GTP, with rapid nucleotide exchange. Plays a role in 16S rRNA processing and 30S ribosomal subunit biogenesis and possibly also in cell cycle regulation and energy metabolism. The protein is GTPase Era of Brucella suis biovar 1 (strain 1330).